The chain runs to 197 residues: Transcription factor FapR (197 aa).

It belongs to the FapR family.

Transcriptional factor involved in regulation of membrane lipid biosynthesis by repressing genes involved in fatty acid and phospholipid metabolism. The protein is Transcription factor FapR of Bacillus cytotoxicus (strain DSM 22905 / CIP 110041 / 391-98 / NVH 391-98).